Consider the following 294-residue polypeptide: UDP-N-acetylenolpyruvoylglucosamine reductase (294 aa).

The FAD-binding PCMH-type domain maps to 26–189; it reads VGGQADVLFK…IEAEFKGVSS (164 aa). Residue R169 is part of the active site. The Proton donor role is filled by C218. E288 is a catalytic residue.

It belongs to the MurB family. FAD serves as cofactor.

The protein resides in the cytoplasm. The enzyme catalyses UDP-N-acetyl-alpha-D-muramate + NADP(+) = UDP-N-acetyl-3-O-(1-carboxyvinyl)-alpha-D-glucosamine + NADPH + H(+). It functions in the pathway cell wall biogenesis; peptidoglycan biosynthesis. Its function is as follows. Cell wall formation. This chain is UDP-N-acetylenolpyruvoylglucosamine reductase, found in Wolbachia pipientis subsp. Culex pipiens (strain wPip).